A 32-amino-acid chain; its full sequence is Unknown protein from spot 206 of 2D-PAGE of etiolated coleoptile (32 aa).

The chain is Unknown protein from spot 206 of 2D-PAGE of etiolated coleoptile from Zea mays (Maize).